The following is a 448-amino-acid chain: Adenylosuccinate synthetase (448 aa).

GTP is bound by residues 22-28 (GDEGKGK) and 50-52 (GHT). Catalysis depends on Asp23, which acts as the Proton acceptor. Mg(2+)-binding residues include Asp23 and Gly50. Residues 23–26 (DEGK), 48–51 (NAGH), Thr139, Arg153, Gln234, Thr249, and Arg321 each bind IMP. His51 serves as the catalytic Proton donor. 317–323 (SVTGRPR) serves as a coordination point for substrate. Residues Arg323, 349 to 351 (KLD), and 431 to 433 (STG) each bind GTP.

This sequence belongs to the adenylosuccinate synthetase family. In terms of assembly, homodimer. The cofactor is Mg(2+).

The protein resides in the cytoplasm. It carries out the reaction IMP + L-aspartate + GTP = N(6)-(1,2-dicarboxyethyl)-AMP + GDP + phosphate + 2 H(+). Its pathway is purine metabolism; AMP biosynthesis via de novo pathway; AMP from IMP: step 1/2. In terms of biological role, plays an important role in the de novo pathway of purine nucleotide biosynthesis. Catalyzes the first committed step in the biosynthesis of AMP from IMP. This Burkholderia thailandensis (strain ATCC 700388 / DSM 13276 / CCUG 48851 / CIP 106301 / E264) protein is Adenylosuccinate synthetase.